The following is a 352-amino-acid chain: Phenylalanine--tRNA ligase alpha subunit (352 aa).

Glu-258 provides a ligand contact to Mg(2+).

Belongs to the class-II aminoacyl-tRNA synthetase family. Phe-tRNA synthetase alpha subunit type 1 subfamily. Tetramer of two alpha and two beta subunits. It depends on Mg(2+) as a cofactor.

It is found in the cytoplasm. The catalysed reaction is tRNA(Phe) + L-phenylalanine + ATP = L-phenylalanyl-tRNA(Phe) + AMP + diphosphate + H(+). This is Phenylalanine--tRNA ligase alpha subunit from Staphylococcus haemolyticus (strain JCSC1435).